The primary structure comprises 313 residues: tRNA dimethylallyltransferase (313 aa).

11–18 (GPTASGKT) lines the ATP pocket. 13–18 (TASGKT) contacts substrate. 2 interaction with substrate tRNA regions span residues 36–39 (DSRQ) and 160–164 (QRLIR).

Belongs to the IPP transferase family. In terms of assembly, monomer. It depends on Mg(2+) as a cofactor.

It carries out the reaction adenosine(37) in tRNA + dimethylallyl diphosphate = N(6)-dimethylallyladenosine(37) in tRNA + diphosphate. In terms of biological role, catalyzes the transfer of a dimethylallyl group onto the adenine at position 37 in tRNAs that read codons beginning with uridine, leading to the formation of N6-(dimethylallyl)adenosine (i(6)A). The polypeptide is tRNA dimethylallyltransferase (Chlorobaculum parvum (strain DSM 263 / NCIMB 8327) (Chlorobium vibrioforme subsp. thiosulfatophilum)).